The primary structure comprises 200 residues: Large ribosomal subunit protein uL4 (200 aa).

The segment at 38–73 (GRQGTKGQKSRSDVSGGGKRPWRQKGTGRARAGTTR) is disordered.

It belongs to the universal ribosomal protein uL4 family. Part of the 50S ribosomal subunit.

Functionally, one of the primary rRNA binding proteins, this protein initially binds near the 5'-end of the 23S rRNA. It is important during the early stages of 50S assembly. It makes multiple contacts with different domains of the 23S rRNA in the assembled 50S subunit and ribosome. Forms part of the polypeptide exit tunnel. This chain is Large ribosomal subunit protein uL4, found in Ectopseudomonas mendocina (strain ymp) (Pseudomonas mendocina).